The primary structure comprises 356 residues: Probable dual-specificity RNA methyltransferase RlmN (356 aa).

Residue Glu92 is the Proton acceptor of the active site. A Radical SAM core domain is found at 98–336 (HKYGFSVCVT…CGVRLEHGTD (239 aa)). Residues Cys105 and Cys341 are joined by a disulfide bond. [4Fe-4S] cluster is bound by residues Cys112, Cys116, and Cys119. Residues 164 to 165 (GE), Ser196, 219 to 221 (SLH), and Asn297 each bind S-adenosyl-L-methionine. The S-methylcysteine intermediate role is filled by Cys341.

It belongs to the radical SAM superfamily. RlmN family. The cofactor is [4Fe-4S] cluster.

It is found in the cytoplasm. It catalyses the reaction adenosine(2503) in 23S rRNA + 2 reduced [2Fe-2S]-[ferredoxin] + 2 S-adenosyl-L-methionine = 2-methyladenosine(2503) in 23S rRNA + 5'-deoxyadenosine + L-methionine + 2 oxidized [2Fe-2S]-[ferredoxin] + S-adenosyl-L-homocysteine. The enzyme catalyses adenosine(37) in tRNA + 2 reduced [2Fe-2S]-[ferredoxin] + 2 S-adenosyl-L-methionine = 2-methyladenosine(37) in tRNA + 5'-deoxyadenosine + L-methionine + 2 oxidized [2Fe-2S]-[ferredoxin] + S-adenosyl-L-homocysteine. Specifically methylates position 2 of adenine 2503 in 23S rRNA and position 2 of adenine 37 in tRNAs. The polypeptide is Probable dual-specificity RNA methyltransferase RlmN (Shouchella clausii (strain KSM-K16) (Alkalihalobacillus clausii)).